The following is a 554-amino-acid chain: uncharacterized protein (554 aa).

Residues 1-25 (MSSSIPPRLYDMSPTESKKQEDVSE) are disordered. S13 is subject to Phosphoserine. The next 6 helical transmembrane spans lie at 82–102 (FFVAGFGWMSDNIWPVCTSLI), 120–140 (APYLTLSQNLGLLVGAMVWSL), 149–169 (WAFNLTFLFTGVFAVIAGASP), 171–191 (FASICVFDALWSFGVGGNLPV), 210–230 (VMSFWWAIGQVIANLVSWGLI), and 253–273 (FLFTMGGMTLLMFAARFLVSV). S334 is modified (phosphoserine). 6 consecutive transmembrane segments (helical) span residues 364–384 (LAISSILVILSWAVIGLAFPL), 412–432 (SLIVSAIGVPGSLIAGVLVEF), 437–457 (KGTLCLSLILTGVFLFASTTA), 462–482 (AYLGWNCTFSFFSDIMYGVLY), 497–517 (AVGLAASANRILGIFSPVIAM), and 525–545 (APIFVSGALFIFAGILVVFFP).

It belongs to the major facilitator superfamily.

Its subcellular location is the endoplasmic reticulum. The protein resides in the membrane. This is an uncharacterized protein from Schizosaccharomyces pombe (strain 972 / ATCC 24843) (Fission yeast).